The sequence spans 143 residues: Nucleoside diphosphate kinase (143 aa).

Residues Lys-11, Phe-59, Arg-87, Thr-93, Arg-104, and Asn-114 each contribute to the ATP site. The Pros-phosphohistidine intermediate role is filled by His-117.

The protein belongs to the NDK family. As to quaternary structure, homotetramer. Mg(2+) is required as a cofactor.

It localises to the cytoplasm. It catalyses the reaction a 2'-deoxyribonucleoside 5'-diphosphate + ATP = a 2'-deoxyribonucleoside 5'-triphosphate + ADP. It carries out the reaction a ribonucleoside 5'-diphosphate + ATP = a ribonucleoside 5'-triphosphate + ADP. Functionally, major role in the synthesis of nucleoside triphosphates other than ATP. The ATP gamma phosphate is transferred to the NDP beta phosphate via a ping-pong mechanism, using a phosphorylated active-site intermediate. The sequence is that of Nucleoside diphosphate kinase from Klebsiella pneumoniae (strain 342).